A 450-amino-acid chain; its full sequence is 5-amino-6-(D-ribitylamino)uracil--L-tyrosine 4-hydroxyphenyl transferase (450 aa).

A disordered region spans residues 1 to 24; it reads MPDVPETVGTPDGSTEFEHRPTTD. One can recognise a Radical SAM core domain in the interval 82-350; the sequence is VTFVANLNNN…MIAVSRLFLD (269 aa). [4Fe-4S] cluster is bound by residues Cys-96, Cys-100, and Cys-103. The interval 430-450 is disordered; the sequence is PDADVLGPQLGPRADGTPLLD.

This sequence belongs to the radical SAM superfamily. CofH family. In terms of assembly, consists of two subunits, CofG and CofH. [4Fe-4S] cluster serves as cofactor.

It catalyses the reaction 5-amino-6-(D-ribitylamino)uracil + L-tyrosine + S-adenosyl-L-methionine = 5-amino-5-(4-hydroxybenzyl)-6-(D-ribitylimino)-5,6-dihydrouracil + 2-iminoacetate + 5'-deoxyadenosine + L-methionine + H(+). Its pathway is cofactor biosynthesis; coenzyme F0 biosynthesis. Functionally, catalyzes the radical-mediated synthesis of 5-amino-5-(4-hydroxybenzyl)-6-(D-ribitylimino)-5,6-dihydrouracil from 5-amino-6-(D-ribitylamino)uracil and L-tyrosine. The polypeptide is 5-amino-6-(D-ribitylamino)uracil--L-tyrosine 4-hydroxyphenyl transferase (Haloarcula marismortui (strain ATCC 43049 / DSM 3752 / JCM 8966 / VKM B-1809) (Halobacterium marismortui)).